Reading from the N-terminus, the 323-residue chain is MSHAHPENWPVLIIAGALDTELLRDVKTLAAAAGESDGNPPFSEQTLVTLRGADAGDHSVLSFVLYAPDEDSDPATAEDLAGVAVVVENGDESGVLELAVHPSYRNQGVAGRLLDALQGKRGLGGLSAWSHGNHEAAAELATRFGYGPVRELWKMRLMSSTSALPDAGLPDGVSLRAFVPGQDEQAWLTANSAAFSHHPEQGSMTRADLEARKAEDWFDPEGFLLAVNAEGELLGFHWTKVHPRQGPHPAIGEVYVVGVTPEAQGLGLGKALTVAGIKHLQDQGLHAVMLYVDADNEAAVALYQKLGFVRWDTDVMYGPLTKN.

2 N-acetyltransferase domains span residues 21 to 176 (ELLR…VSLR) and 173 to 323 (VSLR…LTKN). Glutamate 44 contributes to the 1D-myo-inositol 2-(L-cysteinylamino)-2-deoxy-alpha-D-glucopyranoside binding site. 98–100 (LAV) provides a ligand contact to acetyl-CoA. Residues glutamate 200, lysine 240, and glutamate 253 each contribute to the 1D-myo-inositol 2-(L-cysteinylamino)-2-deoxy-alpha-D-glucopyranoside site. Acetyl-CoA-binding positions include 257–259 (VGV) and 264–270 (QGLGLGK). Tyrosine 291 lines the 1D-myo-inositol 2-(L-cysteinylamino)-2-deoxy-alpha-D-glucopyranoside pocket.

This sequence belongs to the acetyltransferase family. MshD subfamily. As to quaternary structure, monomer.

The catalysed reaction is 1D-myo-inositol 2-(L-cysteinylamino)-2-deoxy-alpha-D-glucopyranoside + acetyl-CoA = mycothiol + CoA + H(+). Its function is as follows. Catalyzes the transfer of acetyl from acetyl-CoA to desacetylmycothiol (Cys-GlcN-Ins) to form mycothiol. This chain is Mycothiol acetyltransferase, found in Paenarthrobacter aurescens (strain TC1).